We begin with the raw amino-acid sequence, 254 residues long: Thiazole synthase (254 aa).

Lysine 95 serves as the catalytic Schiff-base intermediate with DXP. 1-deoxy-D-xylulose 5-phosphate contacts are provided by residues glycine 156, 182-183 (AG), and 204-205 (NT).

Belongs to the ThiG family. Homotetramer. Forms heterodimers with either ThiH or ThiS.

The protein localises to the cytoplasm. The enzyme catalyses [ThiS sulfur-carrier protein]-C-terminal-Gly-aminoethanethioate + 2-iminoacetate + 1-deoxy-D-xylulose 5-phosphate = [ThiS sulfur-carrier protein]-C-terminal Gly-Gly + 2-[(2R,5Z)-2-carboxy-4-methylthiazol-5(2H)-ylidene]ethyl phosphate + 2 H2O + H(+). It functions in the pathway cofactor biosynthesis; thiamine diphosphate biosynthesis. Catalyzes the rearrangement of 1-deoxy-D-xylulose 5-phosphate (DXP) to produce the thiazole phosphate moiety of thiamine. Sulfur is provided by the thiocarboxylate moiety of the carrier protein ThiS. In vitro, sulfur can be provided by H(2)S. This Shewanella sp. (strain MR-7) protein is Thiazole synthase.